Consider the following 339-residue polypeptide: Retroviral-like aspartic protease 1 (339 aa).

Residues 1–188 (MRNPGGPGWA…SEPEEILFAN (188 aa)) constitute a propeptide that is removed on maturation. Positions 34–53 (VPAPFNSSRQGKNTAQPTEP) are disordered. Over residues 38–53 (FNSSRQGKNTAQPTEP) the composition is skewed to polar residues. The N-linked (GlcNAc...) asparagine glycan is linked to Asn39. The helical transmembrane segment at 55–75 (LSSVIAPTLFCAFLYLACVTA) threads the bilayer. The Peptidase A2 domain occupies 205–286 (VRFLVDSGAQ…AEEAIIGTDV (82 aa)). Residue Asp210 is part of the active site. N-linked (GlcNAc...) asparagine glycosylation occurs at Asn274. A propeptide spanning residues 325 to 339 (LIEEEEGSSAPEGSH) is cleaved from the precursor.

Homodimer. In terms of processing, undergoes autocleavage which is necessary for activation of the protein. Highly expressed in stratified epithelia in skin, tongue, esophagus, forestomach and vagina. Also expressed in trachea, urinary bladder and thymus. Undetectable in simple epithelia. Within the epidermis, expressed exclusively in the granular layer (at protein level). Levels are elevated in benign skin tumors but are down-regulated in squamous cell carcinomas.

It localises to the membrane. Its function is as follows. Protease responsible for filaggrin processing, essential for the maintenance of a proper epidermis organization. The chain is Retroviral-like aspartic protease 1 from Mus musculus (Mouse).